A 104-amino-acid chain; its full sequence is MQKIRKGDKVIVLSGKDKGCSGEVIKVNPKENRAFVRGVNMIKRHQRQTQNQEAGIISKEAPIHLSNLAIADPKDGKPTRVGFRVNADGNKVRFAKRSGELING.

This sequence belongs to the universal ribosomal protein uL24 family. Part of the 50S ribosomal subunit.

Its function is as follows. One of two assembly initiator proteins, it binds directly to the 5'-end of the 23S rRNA, where it nucleates assembly of the 50S subunit. One of the proteins that surrounds the polypeptide exit tunnel on the outside of the subunit. This chain is Large ribosomal subunit protein uL24, found in Bartonella henselae (strain ATCC 49882 / DSM 28221 / CCUG 30454 / Houston 1) (Rochalimaea henselae).